A 239-amino-acid polypeptide reads, in one-letter code: 7-cyano-7-deazaguanine synthase (239 aa).

13 to 23 is an ATP binding site; it reads FSGGQDSTTCL. Positions 192, 201, 204, and 207 each coordinate Zn(2+).

The protein belongs to the QueC family. Requires Zn(2+) as cofactor.

It carries out the reaction 7-carboxy-7-deazaguanine + NH4(+) + ATP = 7-cyano-7-deazaguanine + ADP + phosphate + H2O + H(+). It participates in purine metabolism; 7-cyano-7-deazaguanine biosynthesis. Functionally, catalyzes the ATP-dependent conversion of 7-carboxy-7-deazaguanine (CDG) to 7-cyano-7-deazaguanine (preQ(0)). This is 7-cyano-7-deazaguanine synthase from Shewanella sp. (strain MR-4).